A 1239-amino-acid chain; its full sequence is Structural polyprotein (1239 aa).

The tract at residues 1–35 (MFPYPTLNYPPMAPINPMAYRDPNPPRQVAPFRPP) is necessary for nucleocapsid assembly and virus assembly. The disordered stretch occupies residues 1–101 (MFPYPTLNYP…RKPKPGKRQR (101 aa)). Positions 23-34 (PNPPRQVAPFRP) are enriched in pro residues. Positions 36 to 69 (LAAQIEDLRRSIANLTLKQRAPNPPAGPPAKRKK) are host transcription inhibition. The short motif at 43–50 (LRRSIANL) is the Supraphysiological nuclear export signal element. N49 is a glycosylation site (N-linked (GlcNAc...) asparagine; by host). The short motif at 66–69 (KRKK) is the Nuclear localization signal element. Residues 79–101 (KKKRPPPPAKKQKRKPKPGKRQR) show a composition bias toward basic residues. A binding to the viral RNA region spans residues 81–111 (KRPPPPAKKQKRKPKPGKRQRMCMKLESDKT). The segment at 96–110 (PGKRQRMCMKLESDK) is ribosome-binding. Residue S108 is modified to Phosphoserine. Positions 110-259 (KTFPIMLNGQ…KDTPEGSEPW (150 aa)) constitute a Peptidase S3 domain. T111 carries the phosphothreonine modification. H136 (charge relay system) is an active-site residue. The interval 152–157 (KKASIY) is interaction with spike glycoprotein E2. Residues D158 and S210 each act as charge relay system in the active site. The tract at residues 244 to 248 (QKGVT) is interaction with spike glycoprotein E2. Positions 260–271 (SLATVMCVLANI) are functions as an uncleaved signal peptide for the precursor of protein E3/E2. The Extracellular segment spans residues 260-681 (SLATVMCVLA…HVVVVYYYNR (422 aa)). 9 disulfide bridges follow: C266-C275, C280-C284, C283-C315, C341-C444, C344-C349, C411-C425, C472-C585, C521-C545, and C523-C539. N270 is a glycosylation site (N-linked (GlcNAc...) asparagine; by host). N-linked (GlcNAc...) asparagine; by host glycosylation occurs at N637. The helical transmembrane segment at 682-702 (YPLTTIIGLCTCVAIIMVSCD) threads the bilayer. Topologically, residues 703–742 (HPCGSFSGLRNLCITPYKLAPNAQVPILLALLCCIKPTRA) are cytoplasmic. C705 carries S-palmitoyl cysteine; by host lipidation. The segment at 710 to 714 (GLRNL) is interaction with the capsid protein. The segment at 714–734 (LCITPYKLAPNAQVPILLALL) is transient transmembrane before p62-6K protein processing. Residues C715, C735, and C736 are each lipidated (S-palmitoyl cysteine; by host). A disulfide bridge connects residues C715 and C736. At 743–754 (DDTLQVLNYLWN) the chain is on the extracellular side. Residues 755 to 775 (NNQNFFWMQTLIPLAALIVCM) traverse the membrane as a helical segment. Position 776 (R776) is a topological domain, cytoplasmic. The chain crosses the membrane as a helical span at residues 777-797 (MLAALFCCGPAFLLVCGAWAA). The Extracellular portion of the chain corresponds to 798-1215 (AYEHTAVMPN…WSWLKVLVGG (418 aa)). 4 cysteine pairs are disulfide-bonded: C847–C912, C860–C892, C861–C894, and C866–C876. The tract at residues 882-899 (VYPFMWGGAYCFCDTENT) is E1 fusion peptide loop. N-linked (GlcNAc...) asparagine; by host glycosylation is found at N932 and N1069. Intrachain disulfides connect C1058/C1070, C1100/C1175, and C1105/C1179. A helical membrane pass occupies residues 1216 to 1236 (TSAFIVLGLIATAVVALVLFF). Over 1237–1239 (HRH) the chain is Cytoplasmic.

In terms of assembly, homodimer. Homomultimer. Interacts with host karyopherin KPNA4; this interaction allows the nuclear import of the viral capsid protein. Interacts with spike glycoprotein E2. Interacts with host IRAK1; the interaction leads to inhibition of IRAK1-dependent signaling. Part of a tetrameric complex composed of host CRM1, host importin alpha/beta dimer and the viral capsid; this complex blocks the receptor-mediated transport through the nuclear pore. Interacts with host phosphatase PPP1CA; this interaction dephosphorylates the capsid protein, which increases its ability to bind to the viral genome. The precursor of protein E3/E2 and E1 form a heterodimer shortly after synthesis. As to quaternary structure, the precursor of protein E3/E2 and E1 form a heterodimer shortly after synthesis. Processing of the precursor of protein E3/E2 into E2 and E3 results in a heterodimer of the spike glycoproteins E2 and E1. Spike at virion surface are constituted of three E2-E1 heterodimers. After target cell attachment and endocytosis, E1 change conformation to form homotrimers. E2-E1 heterodimers interact with host VLDLR or LRP8/APOER2 to mediate viral entry. Interacts with 6K protein. In terms of assembly, interacts with spike glycoprotein E1. Processing of the precursor of protein E3/E2 into E2 and E3 results in a heterodimer of the spike glycoproteins E2 and E1. Spike at virion surface are constituted of a trimer of E2-E1 heterodimers. Interacts with 6K protein. E2-E1 heterodimers interact with host VLDLR or LRP8/APOER2 to mediate viral entry. Interacts (via E2-A) with host VLDLR (via class A repeats); this interaction mediates viral entry into host cell. Interacts with host LRP8/APOER2 (via class A repeats); this interaction mediates viral entry into host cell. Oligomer. Interacts with spike glycoprotein E1. Interacts with spike glycoprotein E2. In terms of processing, structural polyprotein: Specific enzymatic cleavages in vivo yield mature proteins. Capsid protein is auto-cleaved during polyprotein translation, unmasking a signal peptide at the N-terminus of the precursor of E3/E2. The remaining polyprotein is then targeted to the host endoplasmic reticulum, where host signal peptidase cleaves it into pE2, 6K and E1 proteins. pE2 is further processed to mature E3 and E2 by host furin in trans-Golgi vesicle. Post-translationally, phosphorylated on serine and threonine residues. Palmitoylated via thioester bonds. These palmitoylations may induce disruption of the C-terminus transmembrane. This would result in the reorientation of E2 C-terminus from lumenal to cytoplasmic side. In terms of processing, N-glycosylated. Post-translationally, palmitoylated via thioester bonds.

The protein resides in the virion. Its subcellular location is the host cytoplasm. The protein localises to the host cell membrane. It is found in the host nucleus. It localises to the virion membrane. The protein resides in the host Golgi apparatus. Its subcellular location is the host trans-Golgi network. The protein localises to the host endoplasmic reticulum. The catalysed reaction is Autocatalytic release of the core protein from the N-terminus of the togavirus structural polyprotein by hydrolysis of a -Trp-|-Ser- bond.. Functionally, forms an icosahedral capsid with a T=4 symmetry composed of 240 copies of the capsid protein surrounded by a lipid membrane through which penetrate 80 spikes composed of trimers of E1-E2 heterodimers. The capsid protein binds to the viral RNA genome at a site adjacent to a ribosome binding site for viral genome translation following genome release. Possesses a protease activity that results in its autocatalytic cleavage from the nascent structural protein. Following its self-cleavage, the capsid protein transiently associates with ribosomes, and within several minutes the protein binds to viral RNA and rapidly assembles into icosahedric core particles. The resulting nucleocapsid eventually associates with the cytoplasmic domain of the spike glycoprotein E2 at the cell membrane, leading to budding and formation of mature virions. In case of infection, new virions attach to target cells and after clathrin-mediated endocytosis their membrane fuses with the host endosomal membrane. This leads to the release of the nucleocapsid into the cytoplasm, followed by an uncoating event necessary for the genomic RNA to become accessible. The uncoating might be triggered by the interaction of capsid proteins with ribosomes. Binding of ribosomes would release the genomic RNA since the same region is genomic RNA-binding and ribosome-binding. Specifically inhibits interleukin-1 receptor-associated kinase 1/IRAK1-dependent signaling during viral entry, representing a means by which the alphaviruses may evade innate immune detection and activation prior to viral gene expression. Inhibits host transcription. Forms a tetrameric complex with XPO1/CRM1 and the nuclear import receptor importin. This complex blocks the central channel of host nuclear pores thereby inhibiting the receptor-mediated nuclear transport and thus the host mRNA and rRNA transcription. The inhibition of transcription is linked to a cytopathic effect on the host cell. In terms of biological role, provides the signal sequence for the translocation of the precursor of protein E3/E2 to the host endoplasmic reticulum. Furin-cleaved E3 remains associated with spike glycoprotein E1 and mediates pH protection of the latter during the transport via the secretory pathway. After virion release from the host cell, the assembly protein E3 is gradually released in the extracellular space. Its function is as follows. Plays a role in viral attachment to target host cell, by binding to the cell receptors VLDLR or LRP8/APOER2. Synthesized as a p62 precursor which is processed by furin at the cell membrane just before virion budding, giving rise to E2-E1 heterodimer. The p62-E1 heterodimer is stable, whereas E2-E1 is unstable and dissociate at low pH. p62 is processed at the last step, presumably to avoid E1 fusion activation before its final export to cell surface. E2 C-terminus contains a transitory transmembrane that would be disrupted by palmitoylation, resulting in reorientation of the C-terminal tail from lumenal to cytoplasmic side. This step is critical since E2 C-terminus is involved in budding by interacting with capsid proteins. This release of E2 C-terminus in cytoplasm occurs lately in protein export, and precludes premature assembly of particles at the endoplasmic reticulum membrane. Acts as a viroporin that participates in virus glycoprotein processing and transport to the plasma membrane, cell permeabilization and budding of viral particles. Disrupts the calcium homeostasis of the cell, probably at the endoplasmic reticulum level. This leads to cytoplasmic calcium elevation. Because of its lipophilic properties, the 6K protein is postulated to influence the selection of lipids that interact with the transmembrane domains of the glycoproteins, which, in turn, affects the deformability of the bilayer required for the extreme curvature that occurs as budding proceeds. Present in low amount in virions, about 3% compared to viral glycoproteins. Functionally, class II viral fusion protein. Fusion activity is inactive as long as E1 is bound to E2 in mature virion. After virus attachment to target cell via host VLDLR or LRP8/APOER2 and endocytosis, acidification of the endosome induces dissociation of E1/E2 heterodimer and concomitant trimerization of the E1 subunits. This E1 trimer is fusion active, and promotes release of viral nucleocapsid in cytoplasm after endosome and viral membrane fusion. Efficient fusion requires the presence of cholesterol and sphingolipid in the target membrane. This chain is Structural polyprotein, found in Aedes (Human).